Consider the following 234-residue polypeptide: Sperm-associated microtubule inner protein 5 (234 aa).

As to quaternary structure, microtubule inner protein component of sperm flagellar doublet microtubules. In terms of tissue distribution, expressed in testis (at protein level). Strongly expressed in peritubular cells and Leydig cells and weakly expressed in the cytoplasm of spermatocytes.

Its subcellular location is the cytoplasm. The protein localises to the cytoskeleton. It is found in the flagellum axoneme. The protein resides in the nucleus. Microtubule inner protein (MIP) part of the dynein-decorated doublet microtubules (DMTs) in flagellum axoneme. May serve to reinforce and thus stabilize the microtubule structure in the sperm flagella. The polypeptide is Sperm-associated microtubule inner protein 5 (Homo sapiens (Human)).